The primary structure comprises 407 residues: Carbamoyl phosphate synthase small chain (407 aa).

A CPSase region spans residues 1-205 (MTETTPKTAP…LQDGYGEQDA (205 aa)). L-glutamine is bound by residues Ser-60, Gly-257, and Gly-259. The 189-residue stretch at 209-397 (HVVALDFGVK…INLIRERKGQ (189 aa)) folds into the Glutamine amidotransferase type-1 domain. The Nucleophile role is filled by Cys-286. Residues Leu-287, Gln-290, Asn-328, Gly-330, and Phe-331 each coordinate L-glutamine. Catalysis depends on residues His-370 and Glu-372.

This sequence belongs to the CarA family. In terms of assembly, composed of two chains; the small (or glutamine) chain promotes the hydrolysis of glutamine to ammonia, which is used by the large (or ammonia) chain to synthesize carbamoyl phosphate. Tetramer of heterodimers (alpha,beta)4.

The catalysed reaction is hydrogencarbonate + L-glutamine + 2 ATP + H2O = carbamoyl phosphate + L-glutamate + 2 ADP + phosphate + 2 H(+). The enzyme catalyses L-glutamine + H2O = L-glutamate + NH4(+). It participates in amino-acid biosynthesis; L-arginine biosynthesis; carbamoyl phosphate from bicarbonate: step 1/1. Its pathway is pyrimidine metabolism; UMP biosynthesis via de novo pathway; (S)-dihydroorotate from bicarbonate: step 1/3. Small subunit of the glutamine-dependent carbamoyl phosphate synthetase (CPSase). CPSase catalyzes the formation of carbamoyl phosphate from the ammonia moiety of glutamine, carbonate, and phosphate donated by ATP, constituting the first step of 2 biosynthetic pathways, one leading to arginine and/or urea and the other to pyrimidine nucleotides. The small subunit (glutamine amidotransferase) binds and cleaves glutamine to supply the large subunit with the substrate ammonia. The chain is Carbamoyl phosphate synthase small chain from Brucella abortus (strain S19).